The primary structure comprises 261 residues: Putative phosphite transport system permease protein HtxE (261 aa).

The ABC transmembrane type-1 domain maps to 47 to 253 (EATTETVEVL…VFVFVLDQLQ (207 aa)). The next 3 helical transmembrane spans lie at 122–142 (LIVA…GVLA), 203–220 (RNLR…GGIG), and 229–249 (MFQY…VFVL).

The protein belongs to the binding-protein-dependent transport system permease family.

The protein localises to the cell inner membrane. Probably forms part of a binding-protein-dependent hypophosphite transporter. The chain is Putative phosphite transport system permease protein HtxE (htxE) from Stutzerimonas stutzeri (Pseudomonas stutzeri).